The primary structure comprises 127 residues: Ribonuclease P protein component 1 (127 aa).

It belongs to the eukaryotic/archaeal RNase P protein component 1 family. Consists of a catalytic RNA component and at least 4 protein subunits. Forms a subcomplex with Rnp4 which stimulates the catalytic RNA.

The protein localises to the cytoplasm. The catalysed reaction is Endonucleolytic cleavage of RNA, removing 5'-extranucleotides from tRNA precursor.. Its function is as follows. Part of ribonuclease P, a protein complex that generates mature tRNA molecules by cleaving their 5'-ends. The RNA is catalytic, but its KM for pre-tRNA is 170-fold decreased in the presence of the 4 known protein subunits (Rnp1-4). The protein subunits also decrease the amount of Mg(2+) needed for activity. This chain is Ribonuclease P protein component 1, found in Pyrococcus furiosus (strain ATCC 43587 / DSM 3638 / JCM 8422 / Vc1).